The chain runs to 379 residues: Galactose-1-phosphate uridylyltransferase (379 aa).

The span at 1-10 shows a compositional bias: basic and acidic residues; the sequence is MSHSGADPEQ. Residues 1-20 form a disordered region; that stretch reads MSHSGADPEQRQQASEADAM. Cys-75 is a Zn(2+) binding site. UDP-alpha-D-glucose is bound by residues Ala-81, 97-98, and Asn-173; that span reads ND. His-184 contacts Zn(2+). His-186 functions as the Tele-UMP-histidine intermediate in the catalytic mechanism. Gln-188 serves as a coordination point for UDP-alpha-D-glucose. Glu-202, His-301, His-319, and His-321 together coordinate Zn(2+). Residues 334-337 and 339-340 contribute to the UDP-alpha-D-glucose site; these read KFMV and YE.

This sequence belongs to the galactose-1-phosphate uridylyltransferase type 1 family. As to quaternary structure, homodimer. Requires Zn(2+) as cofactor.

It carries out the reaction alpha-D-galactose 1-phosphate + UDP-alpha-D-glucose = alpha-D-glucose 1-phosphate + UDP-alpha-D-galactose. Its pathway is carbohydrate metabolism; galactose metabolism. Its function is as follows. Plays an important role in galactose metabolism. The sequence is that of Galactose-1-phosphate uridylyltransferase (Galt) from Mus musculus (Mouse).